The chain runs to 454 residues: Bifunctional protein GlmU (454 aa).

The tract at residues 1–240 is pyrophosphorylase; it reads MNVSVVILAA…EEEFMGVNSK (240 aa). Residues 8–11, lysine 22, and 87–88 each bind UDP-N-acetyl-alpha-D-glucosamine; these read LAAG and GT. Residue aspartate 119 coordinates Mg(2+). UDP-N-acetyl-alpha-D-glucosamine contacts are provided by glycine 152, glutamate 166, asparagine 181, and asparagine 238. Asparagine 238 is a binding site for Mg(2+). Positions 241 to 261 are linker; the sequence is IQLACAQEIMLQRLREKAMEQ. Residues 262 to 454 form an N-acetyltransferase region; the sequence is GVIMNLPHTI…SDKNEEKKEQ (193 aa). UDP-N-acetyl-alpha-D-glucosamine is bound by residues arginine 325 and lysine 342. Histidine 353 functions as the Proton acceptor in the catalytic mechanism. Tyrosine 356 and asparagine 367 together coordinate UDP-N-acetyl-alpha-D-glucosamine. Residues alanine 370, 376 to 377, serine 395, alanine 413, and arginine 430 contribute to the acetyl-CoA site; that span reads NY.

This sequence in the N-terminal section; belongs to the N-acetylglucosamine-1-phosphate uridyltransferase family. The protein in the C-terminal section; belongs to the transferase hexapeptide repeat family. In terms of assembly, homotrimer. Requires Mg(2+) as cofactor.

The protein localises to the cytoplasm. The enzyme catalyses alpha-D-glucosamine 1-phosphate + acetyl-CoA = N-acetyl-alpha-D-glucosamine 1-phosphate + CoA + H(+). It catalyses the reaction N-acetyl-alpha-D-glucosamine 1-phosphate + UTP + H(+) = UDP-N-acetyl-alpha-D-glucosamine + diphosphate. It functions in the pathway nucleotide-sugar biosynthesis; UDP-N-acetyl-alpha-D-glucosamine biosynthesis; N-acetyl-alpha-D-glucosamine 1-phosphate from alpha-D-glucosamine 6-phosphate (route II): step 2/2. It participates in nucleotide-sugar biosynthesis; UDP-N-acetyl-alpha-D-glucosamine biosynthesis; UDP-N-acetyl-alpha-D-glucosamine from N-acetyl-alpha-D-glucosamine 1-phosphate: step 1/1. The protein operates within bacterial outer membrane biogenesis; LPS lipid A biosynthesis. Its function is as follows. Catalyzes the last two sequential reactions in the de novo biosynthetic pathway for UDP-N-acetylglucosamine (UDP-GlcNAc). The C-terminal domain catalyzes the transfer of acetyl group from acetyl coenzyme A to glucosamine-1-phosphate (GlcN-1-P) to produce N-acetylglucosamine-1-phosphate (GlcNAc-1-P), which is converted into UDP-GlcNAc by the transfer of uridine 5-monophosphate (from uridine 5-triphosphate), a reaction catalyzed by the N-terminal domain. The chain is Bifunctional protein GlmU from Helicobacter hepaticus (strain ATCC 51449 / 3B1).